The following is a 130-amino-acid chain: Small ribosomal subunit protein uS9 (130 aa).

The disordered stretch occupies residues 102–130; sequence GLLTRDSRMKERKKPGLKGARRAPQFSKR. Basic residues predominate over residues 111-130; it reads KERKKPGLKGARRAPQFSKR.

It belongs to the universal ribosomal protein uS9 family.

This chain is Small ribosomal subunit protein uS9, found in Listeria monocytogenes serovar 1/2a (strain ATCC BAA-679 / EGD-e).